The sequence spans 148 residues: Copper transport protein ctr6 (148 aa).

At 1-33 the chain is on the extracellular side; the sequence is MNHGGNSTMRHCSMKMTFNTDYDNLCIVFKSWH. The helical transmembrane segment at 34–54 threads the bilayer; it reads IGNLSQFLLSLLAIAILGYLF. The Cytoplasmic portion of the chain corresponds to 55–108; sequence ERLRSFTSLKETEFQRGYAGQQSEGLLTHHSKSLKSGRPFRLCALYAVQLVFSY. Residues 109–129 traverse the membrane as a helical segment; it reads FLMLVAMTYNAYVILAIAIGA. Over 130 to 148 the chain is Extracellular; it reads AFGYRRSHCDTVQTVGLCH.

This sequence belongs to the copper transporter (Ctr) (TC 1.A.56) family. SLC31A subfamily. In terms of assembly, homotrimer.

It localises to the vacuole membrane. Mobilizes stored copper from the vacuole to the cytoplasm under conditions of copper limitation. The sequence is that of Copper transport protein ctr6 (ctr6) from Schizosaccharomyces pombe (strain 972 / ATCC 24843) (Fission yeast).